The primary structure comprises 478 residues: Glycogen synthase (478 aa).

Lysine 15 provides a ligand contact to ADP-alpha-D-glucose.

The protein belongs to the glycosyltransferase 1 family. Bacterial/plant glycogen synthase subfamily.

The catalysed reaction is [(1-&gt;4)-alpha-D-glucosyl](n) + ADP-alpha-D-glucose = [(1-&gt;4)-alpha-D-glucosyl](n+1) + ADP + H(+). Its pathway is glycan biosynthesis; glycogen biosynthesis. Functionally, synthesizes alpha-1,4-glucan chains using ADP-glucose. The polypeptide is Glycogen synthase (Clostridium botulinum (strain Alaska E43 / Type E3)).